The sequence spans 335 residues: Transcriptional adapter 1 (335 aa).

It belongs to the TADA1 family. In terms of assembly, component of the STAGA transcription coactivator-HAT complex, at least composed of SUPT3H, GCN5L2, TAF5L, TAF6L, SUPT7L, TADA3L, TAD1L, TAF10, TAF12, TRRAP and TAF9.

The protein localises to the nucleus. In terms of biological role, probably involved in transcriptional regulation. The protein is Transcriptional adapter 1 (TADA1) of Bos taurus (Bovine).